The following is a 702-amino-acid chain: Elongation factor G (702 aa).

Residues 8–290 (SRYRNIGISA…AIIEFLPAPN (283 aa)) enclose the tr-type G domain. GTP is bound by residues 17–24 (AHIDAGKT), 88–92 (DTPGH), and 142–145 (NKMD).

The protein belongs to the TRAFAC class translation factor GTPase superfamily. Classic translation factor GTPase family. EF-G/EF-2 subfamily.

The protein localises to the cytoplasm. In terms of biological role, catalyzes the GTP-dependent ribosomal translocation step during translation elongation. During this step, the ribosome changes from the pre-translocational (PRE) to the post-translocational (POST) state as the newly formed A-site-bound peptidyl-tRNA and P-site-bound deacylated tRNA move to the P and E sites, respectively. Catalyzes the coordinated movement of the two tRNA molecules, the mRNA and conformational changes in the ribosome. This Buchnera aphidicola subsp. Acyrthosiphon pisum (strain 5A) protein is Elongation factor G.